Here is a 479-residue protein sequence, read N- to C-terminus: MQNFEIIIGVENHVELKTNSKMFSPSKVSYGQTPNTLANEIDLAYPGTLPSVNKKGVELAILACNALNMQIDTLLTFDRKNYFYPDLTKGFQITQQFNPIGKNGSLEIILENGNKKVIEIERLHIEEDTAKQVHKDNLTYLDYNRSGVGLIEIVTKPVLRSAEEACLYVEKLREILLFLNVSDVKMNEGSLRTDLNISLRPYGSDKFSNKVEIKNLNSISNIKKAVEFEINRQKEILLKNQIVEQQTRRFDDQTSSTILMRSKIDSIDYRYFREPNIFPIQLDQKWVDQIISNSPELADQKRIRYVNELGLTSEDANIILTSLEMTNFFEKTIKLTTNYNKVAKMLISEIQAKLNLENKTIDQIKLSPENLASVINLIDKNIISSKQTKVVMPIILDSNTETVEQIVERLNLKLITNKDEISKLLVNIINQNKELLNQYSTRPERVIKTIMGQLMKQTNGNVDPEIANEIVIKEIEKNL.

This sequence belongs to the GatB/GatE family. GatB subfamily. Heterotrimer of A, B and C subunits.

It carries out the reaction L-glutamyl-tRNA(Gln) + L-glutamine + ATP + H2O = L-glutaminyl-tRNA(Gln) + L-glutamate + ADP + phosphate + H(+). The catalysed reaction is L-aspartyl-tRNA(Asn) + L-glutamine + ATP + H2O = L-asparaginyl-tRNA(Asn) + L-glutamate + ADP + phosphate + 2 H(+). Allows the formation of correctly charged Asn-tRNA(Asn) or Gln-tRNA(Gln) through the transamidation of misacylated Asp-tRNA(Asn) or Glu-tRNA(Gln) in organisms which lack either or both of asparaginyl-tRNA or glutaminyl-tRNA synthetases. The reaction takes place in the presence of glutamine and ATP through an activated phospho-Asp-tRNA(Asn) or phospho-Glu-tRNA(Gln). In Mycoplasma mycoides subsp. mycoides SC (strain CCUG 32753 / NCTC 10114 / PG1), this protein is Aspartyl/glutamyl-tRNA(Asn/Gln) amidotransferase subunit B.